The chain runs to 345 residues: MKEIKSIEFKNEVLYLIDQRKLPNSYEIFECKTYRDVNFAIKEMVVRGAPAIGAAAAYGVVLAAKEFLKEDREIFFEKIEEALEVIANSRPTAVNLMWAVKRMKKVIEKNKELELIDIYQALKKEADSIYLEDIETNKKMAKFGNEVIKENAVILTHCNTGALATVGYGTALGVIREAHYSGKNIFVYADETRPRLQGSKLTAWELVQEGIPAKLIADSVAATLIRDGKIDVILVGADRIALNGDTANKIGTFMLSVIAKVYNVPFYVVAPTSTIDFEIESGKEIIIEERSPEEVTHINGVRIAPEGIEVYNPAFDVTPHENITGIITEKGIIKPPYKENILKLK.

Residues 47-49, Arg90, and Gln197 contribute to the substrate site; that span reads RGA. Asp238 acts as the Proton donor in catalysis. Position 248 to 249 (248 to 249) interacts with substrate; the sequence is NK.

This sequence belongs to the eIF-2B alpha/beta/delta subunits family. MtnA subfamily.

It catalyses the reaction 5-(methylsulfanyl)-alpha-D-ribose 1-phosphate = 5-(methylsulfanyl)-D-ribulose 1-phosphate. It functions in the pathway amino-acid biosynthesis; L-methionine biosynthesis via salvage pathway; L-methionine from S-methyl-5-thio-alpha-D-ribose 1-phosphate: step 1/6. Its function is as follows. Catalyzes the interconversion of methylthioribose-1-phosphate (MTR-1-P) into methylthioribulose-1-phosphate (MTRu-1-P). The protein is Methylthioribose-1-phosphate isomerase of Thermoanaerobacter pseudethanolicus (strain ATCC 33223 / 39E) (Clostridium thermohydrosulfuricum).